A 368-amino-acid polypeptide reads, in one-letter code: 4-hydroxy-3-methylbut-2-en-1-yl diphosphate synthase (flavodoxin) (368 aa).

[4Fe-4S] cluster contacts are provided by Cys-268, Cys-271, Cys-303, and Glu-310.

Belongs to the IspG family. Requires [4Fe-4S] cluster as cofactor.

It catalyses the reaction (2E)-4-hydroxy-3-methylbut-2-enyl diphosphate + oxidized [flavodoxin] + H2O + 2 H(+) = 2-C-methyl-D-erythritol 2,4-cyclic diphosphate + reduced [flavodoxin]. The protein operates within isoprenoid biosynthesis; isopentenyl diphosphate biosynthesis via DXP pathway; isopentenyl diphosphate from 1-deoxy-D-xylulose 5-phosphate: step 5/6. Its function is as follows. Converts 2C-methyl-D-erythritol 2,4-cyclodiphosphate (ME-2,4cPP) into 1-hydroxy-2-methyl-2-(E)-butenyl 4-diphosphate. This Listeria monocytogenes serotype 4b (strain F2365) protein is 4-hydroxy-3-methylbut-2-en-1-yl diphosphate synthase (flavodoxin).